We begin with the raw amino-acid sequence, 228 residues long: Ribonuclease 3 (228 aa).

The region spanning 3–132 (IRPLEEHLGI…FLGALYLDQG (130 aa)) is the RNase III domain. Position 45 (glutamate 45) interacts with Mg(2+). Residue aspartate 49 is part of the active site. The Mg(2+) site is built by aspartate 118 and glutamate 121. Residue glutamate 121 is part of the active site. One can recognise a DRBM domain in the interval 158–227 (DYKSQLQEFV…AKNALDSINN (70 aa)). The disordered stretch occupies residues 205 to 228 (GTGRTKKEAEQRAAKNALDSINNS).

It belongs to the ribonuclease III family. Homodimer. The cofactor is Mg(2+).

Its subcellular location is the cytoplasm. It catalyses the reaction Endonucleolytic cleavage to 5'-phosphomonoester.. In terms of biological role, digests double-stranded RNA. Involved in the processing of primary rRNA transcript to yield the immediate precursors to the large and small rRNAs (23S and 16S). Processes some mRNAs, and tRNAs when they are encoded in the rRNA operon. Processes pre-crRNA and tracrRNA of type II CRISPR loci if present in the organism. In Oceanobacillus iheyensis (strain DSM 14371 / CIP 107618 / JCM 11309 / KCTC 3954 / HTE831), this protein is Ribonuclease 3.